The primary structure comprises 397 residues: Glutamyl-tRNA reductase (397 aa).

Residues 47-50 (TCGR), Ser-98, 103-105 (ETD), and Gln-109 each bind substrate. The active-site Nucleophile is the Cys-48. 177-182 (GAGAVG) serves as a coordination point for NADP(+).

The protein belongs to the glutamyl-tRNA reductase family. As to quaternary structure, homodimer.

The enzyme catalyses (S)-4-amino-5-oxopentanoate + tRNA(Glu) + NADP(+) = L-glutamyl-tRNA(Glu) + NADPH + H(+). It functions in the pathway porphyrin-containing compound metabolism; protoporphyrin-IX biosynthesis; 5-aminolevulinate from L-glutamyl-tRNA(Glu): step 1/2. Functionally, catalyzes the NADPH-dependent reduction of glutamyl-tRNA(Glu) to glutamate 1-semialdehyde (GSA). This is Glutamyl-tRNA reductase from Pyrobaculum aerophilum (strain ATCC 51768 / DSM 7523 / JCM 9630 / CIP 104966 / NBRC 100827 / IM2).